Reading from the N-terminus, the 594-residue chain is Probable translation initiation factor IF-2 (594 aa).

The region spanning 3 to 220 (IRSPIVSVLG…MLMGLAQQYL (218 aa)) is the tr-type G domain. Residues 12–19 (GHVDHGKT) are G1. A GTP-binding site is contributed by 12 to 19 (GHVDHGKT). Residues 37–41 (GITQH) are G2. Residues 76–79 (DTPG) form a G3 region. GTP is bound by residues 76 to 80 (DTPGH) and 130 to 133 (NKID). A G4 region spans residues 130 to 133 (NKID). The tract at residues 198-200 (SAI) is G5.

Belongs to the TRAFAC class translation factor GTPase superfamily. Classic translation factor GTPase family. IF-2 subfamily.

Function in general translation initiation by promoting the binding of the formylmethionine-tRNA to ribosomes. Seems to function along with eIF-2. The sequence is that of Probable translation initiation factor IF-2 (infB) from Methanothermobacter thermautotrophicus (strain ATCC 29096 / DSM 1053 / JCM 10044 / NBRC 100330 / Delta H) (Methanobacterium thermoautotrophicum).